The sequence spans 171 residues: Secreted LysM effector Blys4 (171 aa).

The LysM domain maps to 125 to 169 (KPYTIHQGDTCWDIAESHSVGVDDILTLNPELDCDKLSIGSQICL).

It belongs to the secreted LysM effector family.

In terms of biological role, might have a role in sequestration of chitin oligosaccharides (breakdown products of fungal cell walls that are released during invasion and act as triggers of host immunity) to dampen host defense. In Beauveria bassiana (strain ARSEF 2860) (White muscardine disease fungus), this protein is Secreted LysM effector Blys4.